The chain runs to 726 residues: Tripartite terminase subunit 1 (726 aa).

The C3H1-type zinc finger occupies 189-217 (CMKCYEELTLTPNQGKSLRKRLHGKFCNH). 626–633 (YNDVFGKR) contributes to the ATP binding site.

It belongs to the herpesviridae TRM1 protein family. As to quaternary structure, associates with TRM2 and TRM3 to form the tripartite terminase complex. Interacts with portal protein.

The protein localises to the host nucleus. Functionally, component of the molecular motor that translocates viral genomic DNA in empty capsid during DNA packaging. Forms a tripartite terminase complex together with TRM2 and TRM3 in the host cytoplasm. Once the complex reaches the host nucleus, it interacts with the capsid portal vertex. This portal forms a ring in which genomic DNA is translocated into the capsid. TRM1 carries an endonuclease activity that plays an important role for the cleavage of concatemeric viral DNA into unit length genomes. This chain is Tripartite terminase subunit 1, found in Human herpesvirus 6B (strain Z29) (HHV-6 variant B).